A 106-amino-acid chain; its full sequence is A-type ATP synthase subunit F (106 aa).

Belongs to the V-ATPase F subunit family. In terms of assembly, has multiple subunits with at least A(3), B(3), C, D, E, F, H, I and proteolipid K(x).

It localises to the cell membrane. In terms of biological role, component of the A-type ATP synthase that produces ATP from ADP in the presence of a proton gradient across the membrane. The polypeptide is A-type ATP synthase subunit F (Methanosphaera stadtmanae (strain ATCC 43021 / DSM 3091 / JCM 11832 / MCB-3)).